The chain runs to 244 residues: Biosynthetic peptidoglycan transglycosylase (244 aa).

A helical membrane pass occupies residues 25–45 (LLLLLTAALLYQSWFLLHIVY).

Belongs to the glycosyltransferase 51 family.

The protein localises to the cell inner membrane. It carries out the reaction [GlcNAc-(1-&gt;4)-Mur2Ac(oyl-L-Ala-gamma-D-Glu-L-Lys-D-Ala-D-Ala)](n)-di-trans,octa-cis-undecaprenyl diphosphate + beta-D-GlcNAc-(1-&gt;4)-Mur2Ac(oyl-L-Ala-gamma-D-Glu-L-Lys-D-Ala-D-Ala)-di-trans,octa-cis-undecaprenyl diphosphate = [GlcNAc-(1-&gt;4)-Mur2Ac(oyl-L-Ala-gamma-D-Glu-L-Lys-D-Ala-D-Ala)](n+1)-di-trans,octa-cis-undecaprenyl diphosphate + di-trans,octa-cis-undecaprenyl diphosphate + H(+). The protein operates within cell wall biogenesis; peptidoglycan biosynthesis. Functionally, peptidoglycan polymerase that catalyzes glycan chain elongation from lipid-linked precursors. In Nitrosomonas europaea (strain ATCC 19718 / CIP 103999 / KCTC 2705 / NBRC 14298), this protein is Biosynthetic peptidoglycan transglycosylase.